We begin with the raw amino-acid sequence, 184 residues long: Cell division protein ZapC (184 aa).

The protein belongs to the ZapC family. As to quaternary structure, interacts directly with FtsZ.

The protein resides in the cytoplasm. Its function is as follows. Contributes to the efficiency of the cell division process by stabilizing the polymeric form of the cell division protein FtsZ. Acts by promoting interactions between FtsZ protofilaments and suppressing the GTPase activity of FtsZ. In Idiomarina loihiensis (strain ATCC BAA-735 / DSM 15497 / L2-TR), this protein is Cell division protein ZapC.